A 712-amino-acid chain; its full sequence is Patatin-like phospholipase domain-containing protein NFIA_019760 (712 aa).

A compositionally biased stretch (basic and acidic residues) spans 1 to 13 (MTSDEKSATRDIY). The segment at 1-21 (MTSDEKSATRDIYDPNTLPDY) is disordered. Residues 85-105 (WPFLFTVFAWITVLGFAYTLT) form a helical membrane-spanning segment. The region spanning 275 to 466 (LCLSGGATFA…RTDIPIKALN (192 aa)) is the PNPLA domain. Positions 306-310 (GTSGG) match the GXSXG motif. Catalysis depends on Ser308, which acts as the Nucleophile. Asp453 functions as the Proton acceptor in the catalytic mechanism. Positions 628–687 (RRRQDRAEEHADRMVERLDQSFPERQSDYKDESHYTEVSDSLSATSSRPHTPDARRSSMF) are disordered. 2 stretches are compositionally biased toward basic and acidic residues: residues 632–646 (DRAE…ERLD) and 652–664 (RQSD…HYTE). Positions 665-676 (VSDSLSATSSRP) are enriched in polar residues. A compositionally biased stretch (basic and acidic residues) spans 677-687 (HTPDARRSSMF).

It belongs to the PLPL family.

Its subcellular location is the membrane. Probable lipid hydrolase. The chain is Patatin-like phospholipase domain-containing protein NFIA_019760 from Neosartorya fischeri (strain ATCC 1020 / DSM 3700 / CBS 544.65 / FGSC A1164 / JCM 1740 / NRRL 181 / WB 181) (Aspergillus fischerianus).